Reading from the N-terminus, the 277-residue chain is Bis(5'-nucleosyl)-tetraphosphatase, symmetrical (277 aa).

The protein belongs to the Ap4A hydrolase family.

It carries out the reaction P(1),P(4)-bis(5'-adenosyl) tetraphosphate + H2O = 2 ADP + 2 H(+). Functionally, hydrolyzes diadenosine 5',5'''-P1,P4-tetraphosphate to yield ADP. The chain is Bis(5'-nucleosyl)-tetraphosphatase, symmetrical from Azotobacter vinelandii (strain DJ / ATCC BAA-1303).